We begin with the raw amino-acid sequence, 531 residues long: Dimethylnonatriene synthase (531 aa).

The helical transmembrane segment at 6–26 (TMSVAMALAAAIFVVLCSVVA) threads the bilayer. Position 464 (Cys-464) interacts with heme.

Belongs to the cytochrome P450 family. It depends on heme as a cofactor.

The protein resides in the membrane. It carries out the reaction (6E,10E)-geranyllinalool + reduced [NADPH--hemoprotein reductase] + O2 = (3E,7E)-4,8,12-trimethyltrideca 1,3,7,11-tetraene + but-3-en-2-one + oxidized [NADPH--hemoprotein reductase] + 2 H2O + H(+). The enzyme catalyses (3S,6E)-nerolidol + reduced [NADPH--hemoprotein reductase] + O2 = (3E)-4,8-dimethylnona-1,3,7-triene + but-3-en-2-one + oxidized [NADPH--hemoprotein reductase] + 2 H2O + H(+). The protein operates within secondary metabolite biosynthesis; terpenoid biosynthesis. Involved in the biosynthesis of homoterpenes, attractants of herbivores parasitoids and predators (e.g. predatory mites and parasitoid wasps). Component of the volatile terpenes biosynthesis pathways. Converts mainly nerolidol to dimethylnonatriene (DMNT) and, to a lower extent, geranyllinalool to trimethyltridecatetraene (TMTT). This is Dimethylnonatriene synthase from Zea mays (Maize).